The sequence spans 297 residues: Phosphate import ATP-binding protein PstB (297 aa).

Residues 50-292 form the ABC transporter domain; sequence MRLRDVEVFY…PEHDLTEAYI (243 aa). 82-89 contacts ATP; sequence GPSGCGKS.

This sequence belongs to the ABC transporter superfamily. Phosphate importer (TC 3.A.1.7) family. As to quaternary structure, the complex is composed of two ATP-binding proteins (PstB), two transmembrane proteins (PstC and PstA) and a solute-binding protein (PstS).

The protein localises to the cell inner membrane. It carries out the reaction phosphate(out) + ATP + H2O = ADP + 2 phosphate(in) + H(+). Part of the ABC transporter complex PstSACB involved in phosphate import. Responsible for energy coupling to the transport system. This is Phosphate import ATP-binding protein PstB from Alcanivorax borkumensis (strain ATCC 700651 / DSM 11573 / NCIMB 13689 / SK2).